Consider the following 500-residue polypeptide: MTLTATMVVDKSFKIGEIDKRIYGSFIEHLGRAVYEGIYEPGHPDGDEQGFRKDVIRLVQELQVPLVRYPGGNFVSGYNWEDGVGPVSERPKRLDLAWRTTETNEIGTNEFVDWAKKVGAEVNMAVNLGSRGVDAARNLVEYCNHPSGSYWSDLRISHGYKDPHNIKTWCLGNEMDGPWQIGQKTAEEYGRVAAEAGKVMKLVDPSIELVACGSSNSKMATFADWEATVLDHTYDYVDYISLHTYYGNRDDDLANYLAQSMDMDEFIRSVIAIADYVKAKKRSKKTIHLSFDEWNVWFHSNEADRQITPWSVAPPLLEDIYTFEDALLVGSMLITLLKHADRVKIACLAQLVNVIAPIMTEKGGPAWKQTIFYPYMHASVYGRGVALQAQISSPKYDSKDFTDVPYLDAAVVHLEEAEEVTIFAVNKHQTESLNLQCDMRSFEGYHVLEHIVLEHENMKATNQGREQVTPHHNGDSAIDQGRLTANLAKLSWNVIRLGKK.

Alpha-L-arabinofuranose-binding residues include Glu28, Asn73, and Asn173. Glu174 (proton donor/acceptor) is an active-site residue. Residues Tyr245, Glu293, and Gln350 each coordinate alpha-L-arabinofuranose. Catalysis depends on Glu293, which acts as the Nucleophile.

The protein belongs to the glycosyl hydrolase 51 family. Homohexamer; trimer of dimers.

The protein localises to the cytoplasm. The catalysed reaction is Hydrolysis of terminal non-reducing alpha-L-arabinofuranoside residues in alpha-L-arabinosides.. It participates in glycan metabolism; L-arabinan degradation. Involved in the degradation of arabinan and is a key enzyme in the complete degradation of the plant cell wall. Catalyzes the cleavage of terminal alpha-(1-&gt;5)-arabinofuranosyl bonds in different hemicellulosic homopolysaccharides (branched and debranched arabinans). The chain is Intracellular exo-alpha-(1-&gt;5)-L-arabinofuranosidase (abfA) from Halalkalibacterium halodurans (strain ATCC BAA-125 / DSM 18197 / FERM 7344 / JCM 9153 / C-125) (Bacillus halodurans).